The following is a 485-amino-acid chain: MIARTKIICTIGPATNTPEMLEKLLDAGMNVARLNFSHGTHESHGRTIAILKELREKRQVPLAIMLDTKGPEIRLGQVESPIKVQPGDRLTLVSKEILGSKESGVTLYPSCVFPYVRERAPVLIDDGYIQAVVVNAQEHMVEIEFQNSGEIKSNKSLSIKDIDVALPFMTEKDIADLKFGVEQELDLIAASFVRCNEDIDSMRKVLESFGRPNMPIIAKIENHLGVQNFQEIARAADGIMIARGDLGIELSIVEVPGLQKFMARASRETGRFCITATQMLESMIRNPLPTRAEVSDVANAIYDGTSAVMLSGETALGAHPVHAVKTMRSIIQETEKTFDYHAFFQLNDKNSALKVSPYLEAIGFSGIQIAEKASAKAIIVYTQTGGSPMFLSKYRPYLPIIAVTPNRNVYYRLAVEWGVYPMLTLESNRTVWRHQACVYGVEKGILSNYDKILVFSRGAGMQDTNNLTLTTVHDVLSPSLDEIVP.

Arg-33 serves as a coordination point for substrate. K(+) is bound by residues Asn-35, Ser-37, Asp-67, and Thr-68. An ATP-binding site is contributed by 35 to 38 (NFSH). Residues Arg-74 and Lys-155 each contribute to the ATP site. Residue Glu-221 coordinates Mg(2+). Gly-244, Asp-245, and Thr-277 together coordinate substrate. Asp-245 contacts Mg(2+).

It belongs to the pyruvate kinase family. As to quaternary structure, homotetramer. Mg(2+) serves as cofactor. K(+) is required as a cofactor.

The catalysed reaction is pyruvate + ATP = phosphoenolpyruvate + ADP + H(+). Its pathway is carbohydrate degradation; glycolysis; pyruvate from D-glyceraldehyde 3-phosphate: step 5/5. This is Pyruvate kinase (pyk) from Chlamydia trachomatis serovar D (strain ATCC VR-885 / DSM 19411 / UW-3/Cx).